A 125-amino-acid polypeptide reads, in one-letter code: Fumarate reductase subunit D (125 aa).

3 consecutive transmembrane segments (helical) span residues 30 to 50 (FAMI…MGVI), 60 to 80 (VVSF…LALP), and 105 to 125 (IACY…IFML).

This sequence belongs to the FrdD family. Part of an enzyme complex containing four subunits: a flavoprotein (FrdA), an iron-sulfur protein (FrdB), and two hydrophobic anchor proteins (FrdC and FrdD).

It localises to the cell inner membrane. Its function is as follows. Anchors the catalytic components of the fumarate reductase complex to the cell membrane, binds quinones. This Vibrio vulnificus (strain YJ016) protein is Fumarate reductase subunit D.